Here is a 112-residue protein sequence, read N- to C-terminus: Large ribosomal subunit protein uL22 (112 aa).

This sequence belongs to the universal ribosomal protein uL22 family. As to quaternary structure, part of the 50S ribosomal subunit.

This protein binds specifically to 23S rRNA; its binding is stimulated by other ribosomal proteins, e.g. L4, L17, and L20. It is important during the early stages of 50S assembly. It makes multiple contacts with different domains of the 23S rRNA in the assembled 50S subunit and ribosome. Functionally, the globular domain of the protein is located near the polypeptide exit tunnel on the outside of the subunit, while an extended beta-hairpin is found that lines the wall of the exit tunnel in the center of the 70S ribosome. This Moorella thermoacetica (strain ATCC 39073 / JCM 9320) protein is Large ribosomal subunit protein uL22.